The following is a 58-amino-acid chain: PGITXTSLHVAPGARLAVKGDIPAGAKSWVINLGKGENDIMLHFNARFDAHGDIRTIV.

Residues 2 to 58 (GITXTSLHVAPGARLAVKGDIPAGAKSWVINLGKGENDIMLHFNARFDAHGDIRTIV) enclose the Galectin domain. A beta-D-galactoside contacts are provided by residues 43 to 47 (HFNAR) and histidine 51.

In terms of assembly, monomer. As to expression, detected in most tissues, most abundantly in skin.

The protein localises to the secreted. It localises to the extracellular space. The protein resides in the extracellular matrix. Functionally, may regulate cell apoptosis and cell differentiation. Binds beta-galactoside and a wide array of complex carbohydrates. The chain is Galectin-1 from Podarcis hispanicus (Iberian wall lizard).